The sequence spans 143 residues: Transcriptional regulator MraZ (143 aa).

2 consecutive SpoVT-AbrB domains span residues 5–47 and 76–119; these read TYTP…PREE and TDEQ…DAQA.

The protein belongs to the MraZ family. Forms oligomers.

It localises to the cytoplasm. The protein localises to the nucleoid. This chain is Transcriptional regulator MraZ, found in Rhodococcus jostii (strain RHA1).